Reading from the N-terminus, the 490-residue chain is Ent-kaurenoic acid oxidase 1 (490 aa).

Residues 6–26 (SWIPVWFPLMVLGCFGLNWLV) form a helical membrane-spanning segment. C439 is a heme binding site.

This sequence belongs to the cytochrome P450 family. Heme serves as cofactor. As to expression, widely expressed. Highly expressed in influorescence stem, influorescence, and silique tissue. Weakly expressed in cauline and rosette leaves. Expressed at a higher level in stem and influorescence than AtKAO2/CYP88A4.

The protein resides in the endoplasmic reticulum membrane. The enzyme catalyses ent-kaur-16-en-19-oate + 3 reduced [NADPH--hemoprotein reductase] + 3 O2 = gibberellin A12 + 3 oxidized [NADPH--hemoprotein reductase] + 4 H2O + 4 H(+). It catalyses the reaction ent-kaur-16-en-19-oate + reduced [NADPH--hemoprotein reductase] + O2 = ent-7alpha-hydroxykaur-16-en-19-oate + oxidized [NADPH--hemoprotein reductase] + H2O + H(+). The catalysed reaction is ent-7alpha-hydroxykaur-16-en-19-oate + reduced [NADPH--hemoprotein reductase] + O2 = gibberellin A12 aldehyde + oxidized [NADPH--hemoprotein reductase] + 2 H2O + H(+). It carries out the reaction gibberellin A12 aldehyde + reduced [NADPH--hemoprotein reductase] + O2 = gibberellin A12 + oxidized [NADPH--hemoprotein reductase] + H2O + 2 H(+). It functions in the pathway plant hormone biosynthesis; gibberellin biosynthesis. Functionally, catalyzes three successive oxidations of ent-kaurenoic acid giving gibberellin 12 (GA12), a key step in gibberellins (GAs) biosynthesis. GAs, which are involved many processes, including stem elongation, play a central role in plant development. The chain is Ent-kaurenoic acid oxidase 1 from Arabidopsis thaliana (Mouse-ear cress).